The following is a 422-amino-acid chain: Histidine--tRNA ligase (422 aa).

The protein belongs to the class-II aminoacyl-tRNA synthetase family. In terms of assembly, homodimer.

It localises to the cytoplasm. The catalysed reaction is tRNA(His) + L-histidine + ATP = L-histidyl-tRNA(His) + AMP + diphosphate + H(+). The protein is Histidine--tRNA ligase of Vesicomyosocius okutanii subsp. Calyptogena okutanii (strain HA).